The primary structure comprises 428 residues: Anaerobic glycerol-3-phosphate dehydrogenase subunit B (428 aa).

It belongs to the anaerobic G-3-P dehydrogenase subunit B family. Composed of a catalytic GlpA/B dimer and of membrane bound GlpC. Requires FMN as cofactor.

The catalysed reaction is a quinone + sn-glycerol 3-phosphate = dihydroxyacetone phosphate + a quinol. It participates in polyol metabolism; glycerol degradation via glycerol kinase pathway; glycerone phosphate from sn-glycerol 3-phosphate (anaerobic route): step 1/1. In terms of biological role, conversion of glycerol 3-phosphate to dihydroxyacetone. Uses fumarate or nitrate as electron acceptor. This Actinobacillus pleuropneumoniae serotype 5b (strain L20) protein is Anaerobic glycerol-3-phosphate dehydrogenase subunit B.